A 119-amino-acid chain; its full sequence is Large ribosomal subunit protein bL20 (119 aa).

Belongs to the bacterial ribosomal protein bL20 family.

Binds directly to 23S ribosomal RNA and is necessary for the in vitro assembly process of the 50S ribosomal subunit. It is not involved in the protein synthesizing functions of that subunit. The polypeptide is Large ribosomal subunit protein bL20 (Acidovorax sp. (strain JS42)).